A 612-amino-acid chain; its full sequence is Dihydroxy-acid dehydratase (612 aa).

Residue Asp-81 participates in Mg(2+) binding. Residue Cys-122 coordinates [2Fe-2S] cluster. Residues Asp-123 and Lys-124 each coordinate Mg(2+). At Lys-124 the chain carries N6-carboxylysine. Cys-195 contributes to the [2Fe-2S] cluster binding site. Glu-491 is a binding site for Mg(2+). Ser-517 serves as the catalytic Proton acceptor.

The protein belongs to the IlvD/Edd family. In terms of assembly, homodimer. [2Fe-2S] cluster is required as a cofactor. Mg(2+) serves as cofactor.

It catalyses the reaction (2R)-2,3-dihydroxy-3-methylbutanoate = 3-methyl-2-oxobutanoate + H2O. The enzyme catalyses (2R,3R)-2,3-dihydroxy-3-methylpentanoate = (S)-3-methyl-2-oxopentanoate + H2O. Its pathway is amino-acid biosynthesis; L-isoleucine biosynthesis; L-isoleucine from 2-oxobutanoate: step 3/4. The protein operates within amino-acid biosynthesis; L-valine biosynthesis; L-valine from pyruvate: step 3/4. Its function is as follows. Functions in the biosynthesis of branched-chain amino acids. Catalyzes the dehydration of (2R,3R)-2,3-dihydroxy-3-methylpentanoate (2,3-dihydroxy-3-methylvalerate) into 2-oxo-3-methylpentanoate (2-oxo-3-methylvalerate) and of (2R)-2,3-dihydroxy-3-methylbutanoate (2,3-dihydroxyisovalerate) into 2-oxo-3-methylbutanoate (2-oxoisovalerate), the penultimate precursor to L-isoleucine and L-valine, respectively. This Rhizobium etli (strain CIAT 652) protein is Dihydroxy-acid dehydratase.